Consider the following 283-residue polypeptide: K88 fimbrial protein AC (283 aa).

A signal peptide spans 1-21 (MKKTLIALAIAASAASGMAHA).

Belongs to the fimbrial K88 protein family. As to quaternary structure, K88 fimbria, 0.1-1 micrometer in length and 7 nanometers in diameter, is composed of about 100 identical subunits.

The protein localises to the fimbrium. In terms of biological role, K88 major fimbrial subunit. Fimbriae (also called pili), are polar filaments radiating from the surface of the bacterium to a length of 0.5-1.5 micrometers and numbering 100-300 per cell. They enable bacteria to colonize the epithelium of specific host organs. This chain is K88 fimbrial protein AC (faeG), found in Escherichia coli.